Consider the following 299-residue polypeptide: Nucleotide-binding protein glr4163 (299 aa).

Position 18–25 (18–25) interacts with ATP; sequence SPAGAGRT.

Belongs to the RapZ-like family.

Functionally, displays ATPase and GTPase activities. The chain is Nucleotide-binding protein glr4163 from Gloeobacter violaceus (strain ATCC 29082 / PCC 7421).